Reading from the N-terminus, the 288-residue chain is Short chain aldehyde dehydrogenase 1 (288 aa).

NAD(+)-binding positions include 26 to 28 (SGI), aspartate 47, 72 to 73 (DV), and 99 to 101 (NAG). Serine 153 (proton donor) is an active-site residue. Serine 153 and tyrosine 166 together coordinate substrate. Tyrosine 166, lysine 170, and threonine 201 together coordinate NAD(+). Tyrosine 166 functions as the Proton acceptor in the catalytic mechanism. Lysine 170 functions as the Proton donor/acceptor in the catalytic mechanism.

Belongs to the short-chain dehydrogenases/reductases (SDR) family. As to quaternary structure, homodimer. As to expression, expressed in mature seeds.

It carries out the reaction 4,5,8-trihydroxycasbene + 2 NAD(+) = jolkinol C + 2 NADH + 2 H(+). The enzyme catalyses a secondary alcohol + NAD(+) = a ketone + NADH + H(+). It catalyses the reaction a primary alcohol + NAD(+) = an aldehyde + NADH + H(+). Its pathway is secondary metabolite biosynthesis; terpenoid biosynthesis. Its function is as follows. Involved in the biosynthesis of macrocyclic lathyrane type diterpenoids (also called Euphorbia factors) natural products, including the cyclization route from casbene to jolkinol C, a precursor for ingenol mebutate that is used to treat actinic keratosis, a precancerous skin condition. Catalyzes the conversion of 4,5,8-trihydroxycasbene into jolkinol C in presence of NAD. Also mediates the formation of casbene dione derivative and 4-ketocasbene from 4-hydroxy-8-ketocasbene and 4-hydroxycasbene, respectively. Together with CYP71D445, triggers the biosynthesis of 8-ketocasbene from 8-hydroxycasbene. The sequence is that of Short chain aldehyde dehydrogenase 1 from Euphorbia lathyris (Caper spurge).